The chain runs to 98 residues: Small ribosomal subunit protein uS17 (98 aa).

It belongs to the universal ribosomal protein uS17 family. As to quaternary structure, part of the 30S ribosomal subunit.

In terms of biological role, one of the primary rRNA binding proteins, it binds specifically to the 5'-end of 16S ribosomal RNA. In Carboxydothermus hydrogenoformans (strain ATCC BAA-161 / DSM 6008 / Z-2901), this protein is Small ribosomal subunit protein uS17.